Here is a 535-residue protein sequence, read N- to C-terminus: Potassium channel subfamily K member 10 (535 aa).

Over 1–68 the chain is Cytoplasmic; it reads MYFSYIGYFF…GLQTVMKWKT (68 aa). A helical membrane pass occupies residues 69–89; sequence VVAIFVVVVVYLVTGGLVFRA. Positions 151 to 177 form an intramembrane region, pore-forming; that stretch reads LGSAFFFAGTVITTIGYGNIAPSTEGG. K(+)-binding residues include Thr164, Ile165, Gly166, and Tyr167. Residues 164–169 are selectivity filter 1; it reads TIGYGN. Residues 179-199 form a helical membrane-spanning segment; sequence IFCILYAIFGIPLFGFLLAGI. Over 200 to 230 the chain is Cytoplasmic; sequence GDQLGTIFGKSIARVEKVFRKKQVSQTKIRV. The chain crosses the membrane as a helical span at residues 231 to 251; sequence ISTILFILAGCIVFVTIPAVI. The segment at residues 260–291 is an intramembrane region (pore-forming); sequence ALESIYFVVVTLTTVGFGDFVAGGNAGINYRE. K(+) contacts are provided by Thr273, Val274, Gly275, and Phe276. A selectivity filter 2 region spans residues 273-278; sequence TVGFGD. Residues 296–316 traverse the membrane as a helical segment; that stretch reads LVWFWILVGLAYFAAVLSMIG. Over 317-535 the chain is Cytoplasmic; sequence DWLRVLSKKT…ENNSLLEDRN (219 aa). 2 disordered regions span residues 410-438 and 510-535; these read QESINNRPNNLRLKGPEQLTKHGQGASED and EMENGMVPTDTKDQGLENNSLLEDRN. Positions 525 to 535 are enriched in polar residues; sequence LENNSLLEDRN.

Homodimer; disulfide-linked. Forms heterodimers with other 2-pore domain K(+) channel subunits, such as KCNK2, KCNK4 and KCNK18. As to expression, detected in dorsal root ganglia (DRG) neurons (at protein level).

Its subcellular location is the cell membrane. It catalyses the reaction K(+)(in) = K(+)(out). The catalysed reaction is Rb(+)(in) = Rb(+)(out). The enzyme catalyses Cs(+)(in) = Cs(+)(out). With respect to regulation, activated by stimuli such as mechanical stretch, acidic pH and polyunsaturated free fatty acids. Activated by a dihydroacridine analog, ML67-33. Inhibited by polycationic dye ruthenium red. Selectively activated by T2A3 (2-[(4-chloro-3-methylphenyl)amino] benzoic acid). Its function is as follows. K(+) channel that conducts voltage-dependent outward rectifying currents upon membrane depolarization. Voltage sensing is coupled to K(+) electrochemical gradient in an 'ion flux gating' mode where outward but not inward ion flow opens the gate. Converts to voltage-independent 'leak' conductance mode upon stimulation by various stimuli including mechanical membrane stretch, acidic pH, heat and lipids. Homo- and heterodimerizes to form functional channels with distinct regulatory and gating properties. In trigeminal ganglia sensory neurons, the heterodimer of KCNK10/TREK-2 and KCNK18/TRESK inhibits neuronal firing and neurogenic inflammation by stabilizing the resting membrane potential at K(+) equilibrium potential as well as by regulating the threshold of action potentials and the spike frequency. Permeable to other monovalent ions such as Rb(+) and Cs(+). In Mus musculus (Mouse), this protein is Potassium channel subfamily K member 10.